Consider the following 399-residue polypeptide: Succinate--CoA ligase [ADP-forming] subunit beta (399 aa).

Positions K9–E254 constitute an ATP-grasp domain. Residues K46, G53 to G55, E109, A112, and E117 contribute to the ATP site. The Mg(2+) site is built by N209 and D223. Residues N274 and G331–M333 contribute to the substrate site.

The protein belongs to the succinate/malate CoA ligase beta subunit family. As to quaternary structure, heterotetramer of two alpha and two beta subunits. Mg(2+) serves as cofactor.

It catalyses the reaction succinate + ATP + CoA = succinyl-CoA + ADP + phosphate. The enzyme catalyses GTP + succinate + CoA = succinyl-CoA + GDP + phosphate. Its pathway is carbohydrate metabolism; tricarboxylic acid cycle; succinate from succinyl-CoA (ligase route): step 1/1. In terms of biological role, succinyl-CoA synthetase functions in the citric acid cycle (TCA), coupling the hydrolysis of succinyl-CoA to the synthesis of either ATP or GTP and thus represents the only step of substrate-level phosphorylation in the TCA. The beta subunit provides nucleotide specificity of the enzyme and binds the substrate succinate, while the binding sites for coenzyme A and phosphate are found in the alpha subunit. The sequence is that of Succinate--CoA ligase [ADP-forming] subunit beta from Caulobacter sp. (strain K31).